A 93-amino-acid chain; its full sequence is Phosphocarrier protein HPr (93 aa).

One can recognise an HPr domain in the interval 2 to 89 (AERRVNVGWA…KLVAEGLEEL (88 aa)). The Pros-phosphohistidine intermediate role is filled by His-15.

The protein belongs to the HPr family.

It is found in the cytoplasm. In terms of biological role, general (non sugar-specific) component of the phosphoenolpyruvate-dependent sugar phosphotransferase system (sugar PTS). This major carbohydrate active-transport system catalyzes the phosphorylation of incoming sugar substrates concomitantly with their translocation across the cell membrane. The phosphoryl group from phosphoenolpyruvate (PEP) is transferred to the phosphoryl carrier protein HPr by enzyme I. Phospho-HPr then transfers it to the PTS EIIA domain. The sequence is that of Phosphocarrier protein HPr (ptsH) from Streptomyces coelicolor (strain ATCC BAA-471 / A3(2) / M145).